The sequence spans 507 residues: MRINPGEIVKVLESKIEGFKEEINLNDVGKVIQVGDGIARAYGLNNVMANEMVEFVETGTIGMAFNLEEDNVGIIILGDYKDIKEGYTVKRLNRIMQVPVGEALLGRVVNPLGEPLDGLGPIDAKEYRDVEVKAPGVIYRKPVDTPLQTGIKLIDALIPIGRGQRELIIGDRQTGKTAIAIDTIINQKGKGVYCIYVAIGQKASAVARLVDKLKQHGAMEYTTVVVASAADNASLQYIAPYAGCAMGEYFMYKGKDALVIYDDLSKHAVAYRQLSLLLRRPPGREAYPGDVFYLHSRLLERAARLDDKYGGGSLTALPIIETQANDISAYIPTNVISITDGQIYLEPSLFYAGQRPAVNIGLSVSRVGGAAQVKAMKKVAGSLKLDLAQYQELETFAQFATELDPATQAQITRGQRLMELMKQEQYSPLEVEEQVAVLYAGINGYLDDLDVEKVRDFEKRFLQYLKENKSELLKQIRETKDLNEELENELRNAIEDYKSEFVKMYGK.

ATP is bound at residue 170–177; that stretch reads GDRQTGKT.

It belongs to the ATPase alpha/beta chains family. In terms of assembly, F-type ATPases have 2 components, CF(1) - the catalytic core - and CF(0) - the membrane proton channel. CF(1) has five subunits: alpha(3), beta(3), gamma(1), delta(1), epsilon(1). CF(0) has three main subunits: a(1), b(2) and c(9-12). The alpha and beta chains form an alternating ring which encloses part of the gamma chain. CF(1) is attached to CF(0) by a central stalk formed by the gamma and epsilon chains, while a peripheral stalk is formed by the delta and b chains.

It is found in the cell inner membrane. It catalyses the reaction ATP + H2O + 4 H(+)(in) = ADP + phosphate + 5 H(+)(out). In terms of biological role, produces ATP from ADP in the presence of a proton gradient across the membrane. The alpha chain is a regulatory subunit. The sequence is that of ATP synthase subunit alpha from Thermosipho melanesiensis (strain DSM 12029 / CIP 104789 / BI429).